The following is a 504-amino-acid chain: Cytochrome P450 2D10 (504 aa).

The residue at position 249 (S249) is a Phosphoserine. Residue C446 participates in heme binding.

This sequence belongs to the cytochrome P450 family. It depends on heme as a cofactor.

It localises to the endoplasmic reticulum membrane. Its subcellular location is the microsome membrane. The catalysed reaction is an organic molecule + reduced [NADPH--hemoprotein reductase] + O2 = an alcohol + oxidized [NADPH--hemoprotein reductase] + H2O + H(+). Functionally, cytochromes P450 are a group of heme-thiolate monooxygenases. In liver microsomes, this enzyme is involved in an NADPH-dependent electron transport pathway. It oxidizes a variety of structurally unrelated compounds, including steroids, fatty acids, and xenobiotics. This chain is Cytochrome P450 2D10 (Cyp2d10), found in Mus musculus (Mouse).